A 57-amino-acid chain; its full sequence is Large ribosomal subunit protein bL32 (57 aa).

Belongs to the bacterial ribosomal protein bL32 family.

This Halalkalibacterium halodurans (strain ATCC BAA-125 / DSM 18197 / FERM 7344 / JCM 9153 / C-125) (Bacillus halodurans) protein is Large ribosomal subunit protein bL32 (rpmF).